A 1888-amino-acid polypeptide reads, in one-letter code: MAAAAAAAVGGQQPSQPELPAPGLALDKAATAAHLKAALSRPDNRAGAEELQALLERVLSAERPLAAAAGGEDAAAAGGGGGPGAAEEEALEWCKCLLAGGGGYDEFCAAVRAYDPAALCGLVWTANFVAYRCRTCGISPCMSLCAECFHQGDHTGHDFNMFRSQAGGACDCGDSNVMRESGFCKRHQIKSSSNIPCVPKDLLMMSEFVLPRFIFCLIQYLREGYNEPAADGPSEKDLNKVLQLLEPQISFLEDLTKMGGAMRSVLTQVLTNQQNYKDLTSGLGENACVKKSHEKYLIALKSSGLTYPEDKLVYGVQEPSAGTSSLAVQGFIGATGTLGQVDSSDEDDQDGSQGLGKRKRVKLSSGTKDQSIMDVLKHKSFLEELLFWTIKYEFPQKMVTFLLNMLPDQEYKVAFTKTFVQHYAFIMKTLKKSHESDTMSNRIVHISVQLFSNEELARQVTEECQLLDIMVTVLLYMMESCLIKSELQDEENSLHVVVNCGEALLKNNTYWPLVSDFINILSHQSVAKRFLEDHGLLVTWMNFVSFFQGMNLNKRELNEHVEFESQTYYAAFAAELEACAQPMWGLLSHCKVRETQEYTRNVVRYCLEALQDWFDAINFVDEPAPNQVTFHLPLHRYYAMFLSKAVKCQELDLDSVLPDQEMLMKLMIHPLQIQASLAEIHSNMWVRNGLQIKGQAMTYVQSHFCNSMIDPDIYLLQVCASRLDPDYFISSVFERFKVVDLLTMASQHQNTVLDAEHERSMLEGALTFLVILLSLRLHLGMSDDEILRAEMVAQLCMNDRTHSSLLDLIPENPNPKSGIIPGSYSFESVLSAVADFKAPVFEPGGSMQQGMYTPKAEVWDQEFDPVMVILRTVYRRDVQSAMDRYTAFLKQSGKFPGNPWPPYKKRTSLHPSYKGLMRLLHCKTLHIVLFTLLYKILMDHQNLSEHVLCMVLYLIELGLENSAEEESDEEASVGGPERCHDSWFPGSNLVSNMRHFINYVRVRVPETAPEVKRDSPASTSSDNLGSLQNSGTAQVFSLVAERRKKFQEIINRSSSEANQVVRPKTSSKWSAPGSAPQLTTAILEIKESILSLLIKLHHKLSGKQNSYYPPWLDDIEILIQPEIPKYSHGDGITAVERILLKAASQSRMNKRIIEEICRKVTPPVPPKKVTAAEKKTLDKEERRQKARERQQKLLAEFASRQKSFMETAMDVDSPENDIPMEITTAEPQVSEAVYDCVICGQSGPSSEDRPTGLVVLLQASSVLGQCRDNVEPKKLPISEEEQIYPWDTCAAVHDVRLSLLQRYFKDSSCLLAVSIGWEGGVYVQTCGHTLHIDCHKSYMESLRNDQVLQGFSVDKGEFTCPLCRQFANSVLPCYPGSNVENNPWQRPSNKSIQDLIKEVEELQGRPGAFPSETNLSKEMESVMKDIKNTTQKKYRDYSKTPGSPDNDFLFMYSVARTNLELELIHRGGNLCSGGASTAGKRSCLNQLFHVLALHMRLYSIDSEYNPWRKLTQLEEMNPQLGYEEQQPEVPILYHDVTSLLLIQILMMPQPLRKDHFTCIVKVLFTLLYTQALAALSVKCSEEDRSAWKHAGALKKSTCDAEKSYEVLLSFVISELFKGKLYHEEGTQECAMVNPIAWSPESMEKCLQDFCLPFLRITSLLQHHLFGEDLPSCQEEEEFSVLASCLGLLPTFYQTEHPFISASCLDWPVPAFDIITQWCFEIKSFTERHAEQGKALLIQESKWKLPHLLQLPENYNTIFQYYHRKTCSVCTKVPKDPAVCLVCGTFVCLKGLCCKQQSYCECVLHSQNCGAGTGIFLLINASVIIIIRGHRFCLWGSVYLDAHGEEDRDLRRGKPLYICKERYKVLEQQWISHTFDHINKRWGPHYNGL.

Positions 1–24 are disordered; the sequence is MAAAAAAAVGGQQPSQPELPAPGL. The UBR-type zinc-finger motif lies at 118–189; that stretch reads ALCGLVWTAN…ESGFCKRHQI (72 aa). Residues 339–362 are disordered; that stretch reads GQVDSSDEDDQDGSQGLGKRKRVK. A phosphoserine mark is found at serine 343 and serine 344. Transmembrane regions (helical) follow at residues 761–781 and 919–939; these read MLEG…HLGM and LLHC…ILMD. Disordered stretches follow at residues 1008–1028 and 1164–1186; these read APEV…GSLQ and VPPK…RQKA. Residues 1016–1028 are compositionally biased toward polar residues; that stretch reads PASTSSDNLGSLQ. Residues 1168–1199 adopt a coiled-coil conformation; sequence KVTAAEKKTLDKEERRQKARERQQKLLAEFAS. The segment covering 1170–1186 has biased composition (basic and acidic residues); it reads TAAEKKTLDKEERRQKA. At serine 1199 the chain carries Phosphoserine. An RING-type; degenerate zinc finger spans residues 1306-1364; sequence DSSCLLAVSIGWEGGVYVQTCGHTLHIDCHKSYMESLRNDQVLQGFSVDKGEFTCPLCR. A helical transmembrane segment spans residues 1806 to 1826; the sequence is QNCGAGTGIFLLINASVIIII.

This sequence belongs to the E3 ubiquitin-protein ligase UBR1-like family. Interacts with UBE2A and UBE2B.

It is found in the membrane. The enzyme catalyses S-ubiquitinyl-[E2 ubiquitin-conjugating enzyme]-L-cysteine + [acceptor protein]-L-lysine = [E2 ubiquitin-conjugating enzyme]-L-cysteine + N(6)-ubiquitinyl-[acceptor protein]-L-lysine.. It functions in the pathway protein modification; protein ubiquitination. E3 ubiquitin-protein ligase which is a component of the N-end rule pathway. Does not bind to proteins bearing specific N-terminal residues that are destabilizing according to the N-end rule, leading to their ubiquitination and subsequent degradation. May play a role in Shh signaling by mediating the ubiquitination of Kif7. May be important for MYH9 function in certain tissues, possibly by regulating the ubiquitination of MYH9 and consequently affecting its interaction with MYO7A. The polypeptide is E3 ubiquitin-protein ligase UBR3 (UBR3) (Homo sapiens (Human)).